The following is a 249-amino-acid chain: 2,3-bisphosphoglycerate-dependent phosphoglycerate mutase (249 aa).

Residues 9–16 (RHGQSQWN), 22–23 (TG), R61, 88–91 (ERHY), K99, 115–116 (RR), and 184–185 (GN) each bind substrate. H10 serves as the catalytic Tele-phosphohistidine intermediate. Residue E88 is the Proton donor/acceptor of the active site.

Belongs to the phosphoglycerate mutase family. BPG-dependent PGAM subfamily. As to quaternary structure, homodimer.

It catalyses the reaction (2R)-2-phosphoglycerate = (2R)-3-phosphoglycerate. It functions in the pathway carbohydrate degradation; glycolysis; pyruvate from D-glyceraldehyde 3-phosphate: step 3/5. In terms of biological role, catalyzes the interconversion of 2-phosphoglycerate and 3-phosphoglycerate. The protein is 2,3-bisphosphoglycerate-dependent phosphoglycerate mutase of Xanthomonas oryzae pv. oryzae (strain MAFF 311018).